A 126-amino-acid polypeptide reads, in one-letter code: MSAAEKKPASKAPAGKAPRDTMKSADKKRGKNRKETYSSYIYKVLKQVHPDTGISNQAMRILNSFVNDIFERIATEASKLAAYNKKSTISSREIQTAVRLILPGELAKHAVTEGTKSVTKYSSSAQ.

The segment at 1–34 (MSAAEKKPASKAPAGKAPRDTMKSADKKRGKNRK) is disordered. Lysine 6 and lysine 7 each carry N6-acetyllysine; alternate. Residues lysine 6 and lysine 7 each participate in a glycyl lysine isopeptide (Lys-Gly) (interchain with G-Cter in SUMO); alternate cross-link. Serine 10 is subject to Phosphoserine. An N6-acetyllysine modification is found at lysine 11. The span at 17 to 27 (APRDTMKSADK) shows a compositional bias: basic and acidic residues. A Glycyl lysine isopeptide (Lys-Gly) (interchain with G-Cter in ubiquitin) cross-link involves residue lysine 120.

Belongs to the histone H2B family. The nucleosome is a histone octamer containing two molecules each of H2A, H2B, H3 and H4 assembled in one H3-H4 heterotetramer and two H2A-H2B heterodimers. The octamer wraps approximately 147 bp of DNA. Interacts with rik1. In terms of processing, monoubiquitinated by the rhp6/ubc2-bre1 complex to form H2BK123ub1. H2BK123ub1 gives a specific tag for epigenetic transcriptional activation and is also prerequisite for H3K4me and H3K79me formation. H2BK123ub1 also modulates the formation of double-strand breaks during meiosis and is a prerequisite for DNA-damage checkpoint activation. Post-translationally, phosphorylated by shk1 to form H2BS10ph during progression through meiotic prophase. May be correlated with chromosome condensation. Acetylation of N-terminal lysines and particularly formation of H2BK11ac has a positive effect on transcription. In terms of processing, sumoylation to form H2BK6su or H2BK7su occurs preferentially near the telomeres and represses gene transcription.

The protein localises to the nucleus. Its subcellular location is the chromosome. Functionally, core component of nucleosome. Nucleosomes wrap and compact DNA into chromatin, limiting DNA accessibility to the cellular machineries which require DNA as a template. Histones thereby play a central role in transcription regulation, DNA repair, DNA replication and chromosomal stability. DNA accessibility is regulated via a complex set of post-translational modifications of histones, also called histone code, and nucleosome remodeling. This Schizosaccharomyces pombe (strain 972 / ATCC 24843) (Fission yeast) protein is Histone H2B-alpha (htb1).